The chain runs to 561 residues: Tudor and KH domain-containing protein (561 aa).

2 KH domains span residues 52-115 and 124-190; these read DIEI…KAAI and PVSE…KHLI. Glycyl lysine isopeptide (Lys-Gly) (interchain with G-Cter in ubiquitin) cross-links involve residues Lys65, Lys76, Lys110, Lys112, Lys152, Lys175, Lys181, Lys187, Lys193, Lys256, and Lys267. The disordered stretch occupies residues 219-262; that stretch reads SVRREDMTEPGGAGEPALWKNTSSSMEPTAPLVTPPPKGGGDMA. Ser278 carries the phosphoserine modification. One can recognise a Tudor domain in the interval 353 to 412; it reads TVHVGDIVAAPLPTNGSWYRARVLGTLENGNLDLYFVDFGDNGDCPLKDLRALRSDFLSL. Glycyl lysine isopeptide (Lys-Gly) (interchain with G-Cter in ubiquitin) cross-links involve residues Lys479, Lys510, and Lys529.

Belongs to the Tdrkh family. Interacts with (symmetrically methylated) PIWIL1, PIWIL2 and PIWIL4. Post-translationally, ubiquitinated by PRKN during mitophagy, leading to its degradation and enhancement of mitophagy. Deubiquitinated by USP30.

It localises to the cytoplasm. The protein localises to the mitochondrion. Participates in the primary piRNA biogenesis pathway and is required during spermatogenesis to repress transposable elements and prevent their mobilization, which is essential for the germline integrity. The piRNA metabolic process mediates the repression of transposable elements during meiosis by forming complexes composed of piRNAs and Piwi proteins and govern the methylation and subsequent repression of transposons. Required for the final steps of primary piRNA biogenesis by participating in the processing of 31-37 nt intermediates into mature piRNAs. May act in pi-bodies and piP-bodies by transferring piRNA precursors or intermediates to or between these granules. In Homo sapiens (Human), this protein is Tudor and KH domain-containing protein (TDRKH).